The sequence spans 308 residues: 4-hydroxyproline 2-epimerase (308 aa).

Residue C88 is the Proton acceptor of the active site. Residues 89 to 90 (GH), H208, and D232 contribute to the substrate site. The active-site Proton donor is C236. A substrate-binding site is contributed by 237–238 (GT).

It belongs to the proline racemase family.

The catalysed reaction is trans-4-hydroxy-L-proline = cis-4-hydroxy-D-proline. Functionally, catalyzes the reversible epimerization of cis-4-hydroxy-D-proline (c4DHyp) to trans-4-hydroxy-L-proline (t4LHyp). May be involved in a degradation pathway that allows P.putida strain KT2440 to grow on either epimer of 4-hydroxyproline, c4DHyp and t4LHyp, as the sole carbon and nitrogen source. Does not exhibit measureable racemase activity in vitro with any of the 19 natural chiral amino acid enantiomers. This chain is 4-hydroxyproline 2-epimerase, found in Pseudomonas putida (strain ATCC 47054 / DSM 6125 / CFBP 8728 / NCIMB 11950 / KT2440).